Reading from the N-terminus, the 333-residue chain is F420-dependent glucose-6-phosphate dehydrogenase (333 aa).

Asp-37 provides a ligand contact to coenzyme F420-(gamma-Glu)n. His-38 (proton donor) is an active-site residue. Coenzyme F420-(gamma-Glu)n-binding positions include Thr-74 and 105-106 (SG). Glu-107 (proton acceptor) is an active-site residue. Residues Asn-110, 174–175 (GG), and 177–178 (VV) contribute to the coenzyme F420-(gamma-Glu)n site. Substrate contacts are provided by Thr-192, Lys-195, Lys-256, and Arg-280.

This sequence belongs to the F420-dependent glucose-6-phosphate dehydrogenase family. Homodimer.

The enzyme catalyses oxidized coenzyme F420-(gamma-L-Glu)(n) + D-glucose 6-phosphate + H(+) = 6-phospho-D-glucono-1,5-lactone + reduced coenzyme F420-(gamma-L-Glu)(n). Functionally, catalyzes the coenzyme F420-dependent oxidation of glucose 6-phosphate (G6P) to 6-phosphogluconolactone. The protein is F420-dependent glucose-6-phosphate dehydrogenase of Amycolatopsis mediterranei (strain U-32).